The following is a 313-amino-acid chain: Small ribosomal subunit protein uS2 (313 aa).

The tract at residues 281 to 301 (AAPAAPAVEPAPEAAQEATAE) is disordered.

The protein belongs to the universal ribosomal protein uS2 family.

The protein is Small ribosomal subunit protein uS2 of Caulobacter sp. (strain K31).